Here is a 360-residue protein sequence, read N- to C-terminus: Phospho-N-acetylmuramoyl-pentapeptide-transferase (360 aa).

10 helical membrane-spanning segments follow: residues 27 to 47 (IVSL…LIAW), 72 to 92 (PTMG…MWAY), 94 to 114 (SNPY…VGFI), 132 to 152 (WKYF…YSIG), 168 to 188 (IMPQ…VGTS), 199 to 219 (GLAI…AWAT), 236 to 256 (AGEL…FLWF), 263 to 283 (VFMG…IAVL), 288 to 308 (FLLV…ILQV), and 338 to 358 (VIVR…ATLK).

It belongs to the glycosyltransferase 4 family. MraY subfamily. Mg(2+) is required as a cofactor.

The protein resides in the cell inner membrane. It catalyses the reaction UDP-N-acetyl-alpha-D-muramoyl-L-alanyl-gamma-D-glutamyl-meso-2,6-diaminopimeloyl-D-alanyl-D-alanine + di-trans,octa-cis-undecaprenyl phosphate = di-trans,octa-cis-undecaprenyl diphospho-N-acetyl-alpha-D-muramoyl-L-alanyl-D-glutamyl-meso-2,6-diaminopimeloyl-D-alanyl-D-alanine + UMP. The protein operates within cell wall biogenesis; peptidoglycan biosynthesis. Functionally, catalyzes the initial step of the lipid cycle reactions in the biosynthesis of the cell wall peptidoglycan: transfers peptidoglycan precursor phospho-MurNAc-pentapeptide from UDP-MurNAc-pentapeptide onto the lipid carrier undecaprenyl phosphate, yielding undecaprenyl-pyrophosphoryl-MurNAc-pentapeptide, known as lipid I. The protein is Phospho-N-acetylmuramoyl-pentapeptide-transferase of Yersinia pestis bv. Antiqua (strain Angola).